We begin with the raw amino-acid sequence, 397 residues long: RNA polymerase II elongation factor ELL3 (397 aa).

Disordered regions lie at residues 164 to 219 and 237 to 284; these read VSDP…KRSV and VPSP…PEDI. The segment covering 168-178 has biased composition (polar residues); that stretch reads LASNQGQSLPG. Acidic residues predominate over residues 250 to 262; the sequence is QEGEDWEQEDEDM. Positions 269–281 are enriched in low complexity; the sequence is SSSVQEDSESPSP. The region spanning 285-395 is the OCEL domain; the sequence is PDYLLQYRAI…LILEFEEKNR (111 aa).

Belongs to the ELL/occludin family. In terms of assembly, interacts with AFF4. Component of the super elongation complex (SEC), at least composed of EAF1, EAF2, CDK9, MLLT3/AF9, AFF (AFF1 or AFF4), the P-TEFb complex and ELL (ELL, ELL2 or ELL3). Component of the little elongation complex (LEC), at least composed of ELL (ELL, ELL2 or ELL3), ZC3H8, ICE1 and ICE2. Testis specific.

It localises to the nucleus. Its function is as follows. Enhancer-binding elongation factor that specifically binds enhancers in embryonic stem cells (ES cells), marks them, and is required for their future activation during stem cell specification. Does not only bind to enhancer regions of active genes, but also marks the enhancers that are in a poised or inactive state in ES cells and is required for establishing proper RNA polymerase II occupancy at developmentally regulated genes in a cohesin-dependent manner. Probably required for priming developmentally regulated genes for later recruitment of the super elongation complex (SEC), for transcriptional activation during differentiation. Required for recruitment of P-TEFb within SEC during differentiation. Probably preloaded on germ cell chromatin, suggesting that it may prime gene activation by marking enhancers as early as in the germ cells. Promoting epithelial-mesenchymal transition (EMT). Elongation factor component of the super elongation complex (SEC), a complex required to increase the catalytic rate of RNA polymerase II transcription by suppressing transient pausing by the polymerase at multiple sites along the DNA. Component of the little elongation complex (LEC), a complex required to regulate small nuclear RNA (snRNA) gene transcription by RNA polymerase II and III. This Homo sapiens (Human) protein is RNA polymerase II elongation factor ELL3 (ELL3).